Here is a 507-residue protein sequence, read N- to C-terminus: Keratin, type II cuticular Hb5 (507 aa).

The head stretch occupies residues methionine 1–glutamate 123. In terms of domain architecture, IF rod spans glutamate 123–leucine 434. A coil 1A region spans residues lysine 124 to tyrosine 158. A linker 1 region spans residues glutamine 159–leucine 168. A coil 1B region spans residues glutamate 169–alanine 269. A Glycyl lysine isopeptide (Lys-Gly) (interchain with G-Cter in SUMO1) cross-link involves residue lysine 229. The interval histidine 270–leucine 286 is linker 12. The segment at asparagine 287–glutamate 430 is coil 2. The segment at glutamate 431–alanine 507 is tail.

It belongs to the intermediate filament family. Heterotetramer of two type I and two type II keratins.

The polypeptide is Keratin, type II cuticular Hb5 (Krt85) (Mus musculus (Mouse)).